Reading from the N-terminus, the 201-residue chain is Recombination protein RecR (201 aa).

The segment at 60-75 (CSRCFHFTDAEECSIC) adopts a C4-type zinc-finger fold. The 96-residue stretch at 83–178 (GEICVVETTA…RVSRIAYGIP (96 aa)) folds into the Toprim domain.

It belongs to the RecR family.

In terms of biological role, may play a role in DNA repair. It seems to be involved in an RecBC-independent recombinational process of DNA repair. It may act with RecF and RecO. The polypeptide is Recombination protein RecR (Syntrophobacter fumaroxidans (strain DSM 10017 / MPOB)).